The chain runs to 379 residues: Homoserine O-succinyltransferase (379 aa).

The AB hydrolase-1 domain maps to 51–360; the sequence is NAVLICHALS…DSPYGHDAFL (310 aa). S157 acts as the Nucleophile in catalysis. R227 serves as a coordination point for substrate. Active-site residues include D323 and H356. Substrate is bound at residue D357.

This sequence belongs to the AB hydrolase superfamily. MetX family. As to quaternary structure, homodimer.

Its subcellular location is the cytoplasm. The catalysed reaction is L-homoserine + succinyl-CoA = O-succinyl-L-homoserine + CoA. Its pathway is amino-acid biosynthesis; L-methionine biosynthesis via de novo pathway; O-succinyl-L-homoserine from L-homoserine: step 1/1. Its function is as follows. Transfers a succinyl group from succinyl-CoA to L-homoserine, forming succinyl-L-homoserine. The sequence is that of Homoserine O-succinyltransferase from Pseudomonas putida (strain GB-1).